The primary structure comprises 487 residues: Cytochrome c-552 (487 aa).

Positions Met-1–Ala-27 are cleaved as a signal peptide. Heme c is bound at residue His-104. Residues Cys-132, Cys-135, and Lys-136 each coordinate heme. Heme c is bound by residues Cys-170, Cys-173, His-174, Cys-219, Cys-222, and His-223. The Ca(2+) site is built by Glu-225, Tyr-226, Lys-271, and Gln-273. Tyr-226 is a binding site for substrate. His-274 is a binding site for substrate. Heme c is bound by residues His-285, Cys-292, Cys-295, His-296, His-311, Cys-324, Cys-327, His-328, and His-403.

It belongs to the cytochrome c-552 family. Ca(2+) serves as cofactor. Requires heme c as cofactor.

Its subcellular location is the periplasm. The catalysed reaction is 6 Fe(III)-[cytochrome c] + NH4(+) + 2 H2O = 6 Fe(II)-[cytochrome c] + nitrite + 8 H(+). The protein operates within nitrogen metabolism; nitrate reduction (assimilation). Catalyzes the reduction of nitrite to ammonia, consuming six electrons in the process. In Photobacterium profundum (strain SS9), this protein is Cytochrome c-552.